The sequence spans 146 residues: Putative transposon Ty5-1 protein YCL075W (146 aa).

This chain is Putative transposon Ty5-1 protein YCL075W (TY5B), found in Saccharomyces cerevisiae (strain ATCC 204508 / S288c) (Baker's yeast).